We begin with the raw amino-acid sequence, 323 residues long: tRNA U34 carboxymethyltransferase (323 aa).

Residues Lys-91, Trp-105, Lys-110, Gly-130, 152-154 (DPT), 181-182 (IE), Met-196, Tyr-200, and Arg-315 each bind carboxy-S-adenosyl-L-methionine.

This sequence belongs to the class I-like SAM-binding methyltransferase superfamily. CmoB family. As to quaternary structure, homotetramer.

It carries out the reaction carboxy-S-adenosyl-L-methionine + 5-hydroxyuridine(34) in tRNA = 5-carboxymethoxyuridine(34) in tRNA + S-adenosyl-L-homocysteine + H(+). Catalyzes carboxymethyl transfer from carboxy-S-adenosyl-L-methionine (Cx-SAM) to 5-hydroxyuridine (ho5U) to form 5-carboxymethoxyuridine (cmo5U) at position 34 in tRNAs. The protein is tRNA U34 carboxymethyltransferase of Escherichia fergusonii (strain ATCC 35469 / DSM 13698 / CCUG 18766 / IAM 14443 / JCM 21226 / LMG 7866 / NBRC 102419 / NCTC 12128 / CDC 0568-73).